Here is a 383-residue protein sequence, read N- to C-terminus: Chaperone protein DnaJ (383 aa).

In terms of domain architecture, J spans 5-70; the sequence is DYYDVLGVSK…DKKAAYDRYG (66 aa). The segment at 142–220 adopts a CR-type zinc-finger fold; that stretch reads GMQKTISVPG…CRGAGREEKT (79 aa). The Zn(2+) site is built by C155, C158, C172, C175, C194, C197, C208, and C211. CXXCXGXG motif repeat units follow at residues 155–162, 172–179, 194–201, and 208–215; these read CSACEGTG, CPTCSGMG, and CQACRGAG.

The protein belongs to the DnaJ family. As to quaternary structure, homodimer. Requires Zn(2+) as cofactor.

The protein resides in the cytoplasm. Its function is as follows. Participates actively in the response to hyperosmotic and heat shock by preventing the aggregation of stress-denatured proteins and by disaggregating proteins, also in an autonomous, DnaK-independent fashion. Unfolded proteins bind initially to DnaJ; upon interaction with the DnaJ-bound protein, DnaK hydrolyzes its bound ATP, resulting in the formation of a stable complex. GrpE releases ADP from DnaK; ATP binding to DnaK triggers the release of the substrate protein, thus completing the reaction cycle. Several rounds of ATP-dependent interactions between DnaJ, DnaK and GrpE are required for fully efficient folding. Also involved, together with DnaK and GrpE, in the DNA replication of plasmids through activation of initiation proteins. The chain is Chaperone protein DnaJ from Dinoroseobacter shibae (strain DSM 16493 / NCIMB 14021 / DFL 12).